The following is a 138-amino-acid chain: Large ribosomal subunit protein uL16 (138 aa).

Basic residues predominate over residues 1-13 (MLQPARRKYRKEQ). Residues 1–22 (MLQPARRKYRKEQKGRNTGVAT) are disordered.

It belongs to the universal ribosomal protein uL16 family. In terms of assembly, part of the 50S ribosomal subunit.

Its function is as follows. Binds 23S rRNA and is also seen to make contacts with the A and possibly P site tRNAs. The sequence is that of Large ribosomal subunit protein uL16 from Paracidovorax citrulli (strain AAC00-1) (Acidovorax citrulli).